A 290-amino-acid polypeptide reads, in one-letter code: 4-hydroxy-tetrahydrodipicolinate synthase (290 aa).

Ser44 provides a ligand contact to pyruvate. Tyr132 serves as the catalytic Proton donor/acceptor. The active-site Schiff-base intermediate with substrate is Lys161. A pyruvate-binding site is contributed by Val202.

It belongs to the DapA family. As to quaternary structure, homotetramer; dimer of dimers.

It localises to the cytoplasm. The catalysed reaction is L-aspartate 4-semialdehyde + pyruvate = (2S,4S)-4-hydroxy-2,3,4,5-tetrahydrodipicolinate + H2O + H(+). Its pathway is amino-acid biosynthesis; L-lysine biosynthesis via DAP pathway; (S)-tetrahydrodipicolinate from L-aspartate: step 3/4. Functionally, catalyzes the condensation of (S)-aspartate-beta-semialdehyde [(S)-ASA] and pyruvate to 4-hydroxy-tetrahydrodipicolinate (HTPA). The sequence is that of 4-hydroxy-tetrahydrodipicolinate synthase from Hydrogenobaculum sp. (strain Y04AAS1).